We begin with the raw amino-acid sequence, 377 residues long: MDFVNNLDTDTSLSILSCLDDPSDIVRASAVSRSWRQFVVKYSLSKNLCLKLFHQLSNVDHIIETSNDRNGESSEAGSSSLMDTRLLEKEHRAFALLARGCMSSPIESCIADAIRASSTDNYPVESILNTLEKRDRIGRTPSYWSSTGQHKTTVPESLLYKLIGDLCLITEVSIHPFQAYFQRGHPIYSSHYVRFRLGHEKDNSPHYNNSQDKKGEPGKSSIESNYVWTYTSQEFSMAQENRLQSFQLPEPVLCIGGYLLVEFLGRVQTQEMDGQYYICVSHVKVEGRSLAKSFRVENVDDNGKFGLKVLSYNDPKKMEEMDAEAGQDMDAEAGQSQLRNLEQLLNLLHRHPLDVVDYVWPDESDDEYAESEDEAEP.

The F-box domain maps to Leu-7–Asn-47.

The chain is F-box protein At4g00755 from Arabidopsis thaliana (Mouse-ear cress).